The sequence spans 436 residues: Anhydro-N-acetylmuramic acid kinase (436 aa).

32–39 (GTSLDGMD) contributes to the ATP binding site.

This sequence belongs to the anhydro-N-acetylmuramic acid kinase family.

It catalyses the reaction 1,6-anhydro-N-acetyl-beta-muramate + ATP + H2O = N-acetyl-D-muramate 6-phosphate + ADP + H(+). Its pathway is amino-sugar metabolism; 1,6-anhydro-N-acetylmuramate degradation. The protein operates within cell wall biogenesis; peptidoglycan recycling. Functionally, catalyzes the specific phosphorylation of 1,6-anhydro-N-acetylmuramic acid (anhMurNAc) with the simultaneous cleavage of the 1,6-anhydro ring, generating MurNAc-6-P. Is required for the utilization of anhMurNAc either imported from the medium or derived from its own cell wall murein, and thus plays a role in cell wall recycling. In Psychrobacter arcticus (strain DSM 17307 / VKM B-2377 / 273-4), this protein is Anhydro-N-acetylmuramic acid kinase.